A 651-amino-acid polypeptide reads, in one-letter code: Probable potassium transport system protein Kup (651 aa).

The next 12 membrane-spanning stretches (helical) occupy residues 41–61 (LVLG…IYAF), 82–102 (VVSL…VLFV), 130–150 (LILG…VITP), 163–183 (IVAP…LVTL), 194–214 (VAIV…ASGL), 235–255 (FLTV…LAMT), 276–296 (WLWI…AFIL), 309–329 (MIPS…TVIA), 366–386 (IYIP…VLGF), 395–415 (AYGI…YIAM), 426–446 (ALPI…ANII), and 450–470 (EGGW…WTWV).

It belongs to the HAK/KUP transporter (TC 2.A.72) family.

It is found in the cell inner membrane. It catalyses the reaction K(+)(in) + H(+)(in) = K(+)(out) + H(+)(out). Functionally, transport of potassium into the cell. Likely operates as a K(+):H(+) symporter. This Brucella abortus (strain S19) protein is Probable potassium transport system protein Kup.